Consider the following 484-residue polypeptide: Adenylosuccinate lyase (484 aa).

A2 carries the N-acetylalanine modification. Substrate-binding positions include 20 to 21 (RY), 85 to 87 (RHD), and 111 to 112 (TS). At K147 the chain carries N6-acetyllysine. Residue H159 is the Proton donor/acceptor of the active site. Q241 is a binding site for substrate. S289 functions as the Proton donor/acceptor in the catalytic mechanism. K295 is modified (N6-acetyllysine). Residues R303, R329, S334, and R338 each contribute to the substrate site. K415 participates in a covalent cross-link: Glycyl lysine isopeptide (Lys-Gly) (interchain with G-Cter in SUMO1).

This sequence belongs to the lyase 1 family. Adenylosuccinate lyase subfamily. In terms of assembly, homotetramer. Residues from neighboring subunits contribute catalytic and substrate-binding residues to each active site. In terms of tissue distribution, ubiquitously expressed. Both isoforms are produced by all tissues. Isoform 2 is 10-fold less abundant than isoform 1.

It carries out the reaction N(6)-(1,2-dicarboxyethyl)-AMP = fumarate + AMP. The catalysed reaction is (2S)-2-[5-amino-1-(5-phospho-beta-D-ribosyl)imidazole-4-carboxamido]succinate = 5-amino-1-(5-phospho-beta-D-ribosyl)imidazole-4-carboxamide + fumarate. The protein operates within purine metabolism; AMP biosynthesis via de novo pathway; AMP from IMP: step 2/2. Its pathway is purine metabolism; IMP biosynthesis via de novo pathway; 5-amino-1-(5-phospho-D-ribosyl)imidazole-4-carboxamide from 5-amino-1-(5-phospho-D-ribosyl)imidazole-4-carboxylate: step 2/2. The enzyme reaction kinetics indicate cooperativity between subunits. Functionally, catalyzes two non-sequential steps in de novo AMP synthesis: converts (S)-2-(5-amino-1-(5-phospho-D-ribosyl)imidazole-4-carboxamido)succinate (SAICAR) to fumarate plus 5-amino-1-(5-phospho-D-ribosyl)imidazole-4-carboxamide, and thereby also contributes to de novo IMP synthesis, and converts succinyladenosine monophosphate (SAMP) to AMP and fumarate. The polypeptide is Adenylosuccinate lyase (ADSL) (Homo sapiens (Human)).